The following is a 118-amino-acid chain: Basic phospholipase A2 homolog 1 (118 aa).

7 disulfides stabilise this stretch: Cys11–Cys71, Cys27–Cys117, Cys29–Cys45, Cys44–Cys98, Cys51–Cys91, Cys60–Cys84, and Cys78–Cys89. Positions 106-118 (NKNFNIDTKKRCK) are important for membrane-damaging activities in eukaryotes and bacteria; heparin-binding.

Belongs to the phospholipase A2 family. Group I subfamily. D49 sub-subfamily. As to expression, expressed by the venom gland.

It is found in the secreted. The chain is Basic phospholipase A2 homolog 1 from Laticauda colubrina (Yellow-lipped sea krait).